Reading from the N-terminus, the 219-residue chain is Probable nicotinate-nucleotide adenylyltransferase (219 aa).

The protein belongs to the NadD family.

It catalyses the reaction nicotinate beta-D-ribonucleotide + ATP + H(+) = deamido-NAD(+) + diphosphate. The protein operates within cofactor biosynthesis; NAD(+) biosynthesis; deamido-NAD(+) from nicotinate D-ribonucleotide: step 1/1. Functionally, catalyzes the reversible adenylation of nicotinate mononucleotide (NaMN) to nicotinic acid adenine dinucleotide (NaAD). This is Probable nicotinate-nucleotide adenylyltransferase from Pseudomonas putida (strain W619).